Here is a 553-residue protein sequence, read N- to C-terminus: Formate--tetrahydrofolate ligase (553 aa).

56–63 (TPKGEGKT) contacts ATP.

Belongs to the formate--tetrahydrofolate ligase family.

It catalyses the reaction (6S)-5,6,7,8-tetrahydrofolate + formate + ATP = (6R)-10-formyltetrahydrofolate + ADP + phosphate. The protein operates within one-carbon metabolism; tetrahydrofolate interconversion. This is Formate--tetrahydrofolate ligase from Haloarcula marismortui (strain ATCC 43049 / DSM 3752 / JCM 8966 / VKM B-1809) (Halobacterium marismortui).